The following is an 89-amino-acid chain: Small ribosomal subunit protein uS15 (89 aa).

It belongs to the universal ribosomal protein uS15 family. In terms of assembly, part of the 30S ribosomal subunit. Forms a bridge to the 50S subunit in the 70S ribosome, contacting the 23S rRNA.

Its function is as follows. One of the primary rRNA binding proteins, it binds directly to 16S rRNA where it helps nucleate assembly of the platform of the 30S subunit by binding and bridging several RNA helices of the 16S rRNA. In terms of biological role, forms an intersubunit bridge (bridge B4) with the 23S rRNA of the 50S subunit in the ribosome. The chain is Small ribosomal subunit protein uS15 from Methylobacterium nodulans (strain LMG 21967 / CNCM I-2342 / ORS 2060).